Consider the following 478-residue polypeptide: Lipoprotein lipase (478 aa).

Residues 1 to 27 form the signal peptide; that stretch reads MESKVLLLLALSVWLQSLTVSRGGLVA. Positions 35–56 are interaction with GPIHBP1; sequence KDFRDIESKFALRTPEDTAEDT. An intrachain disulfide couples Cys-57 to Cys-70. The N-linked (GlcNAc...) asparagine glycan is linked to Asn-73. At Tyr-124 the chain carries 3'-nitrotyrosine. Ser-162 serves as the catalytic Nucleophile. The Charge relay system role is filled by Asp-186. Tyr-194 carries the 3'-nitrotyrosine modification. Ca(2+) contacts are provided by Ala-197, Arg-200, Ser-202, and Asp-205. Cys-246 and Cys-269 are joined by a disulfide. The interval 246 to 269 is essential for determining substrate specificity; that stretch reads CNIGEALRVIAERGLGDVDQLVKC. Catalysis depends on His-271, which acts as the Charge relay system. 2 disulfides stabilise this stretch: Cys-294–Cys-313 and Cys-305–Cys-308. The region spanning 344–467 is the PLAT domain; it reads FHYQVKIHFS…KGKSPVIFVK (124 aa). Tyr-346 carries the 3'-nitrotyrosine modification. An N-linked (GlcNAc...) asparagine glycan is attached at Asn-389. The tract at residues 420–424 is important for interaction with lipoprotein particles; sequence WSNWW. Residues 433–437 form an important for heparin binding region; that stretch reads KIRVK. Positions 446–470 are interaction with GPIHBP1; the sequence is IFCSREKMSYLQKGKSPVIFVKCHD. A disulfide bond links Cys-448 and Cys-468.

Belongs to the AB hydrolase superfamily. Lipase family. Homodimer. Interacts with GPIHBP1 with 1:1 stoichiometry. Interacts with APOC2; the interaction activates LPL activity in the presence of lipids. Interaction with heparan sulfate proteoglycans is required to protect LPL against loss of activity. Associates with lipoprotein particles in blood plasma. Interacts with LMF1 and SEL1L; interaction with SEL1L is required to prevent aggregation of newly synthesized LPL in the endoplasmic reticulum (ER), and for normal export of LPL from the ER to the extracellular space. Interacts with SORL1; SORL1 acts as a sorting receptor, promoting LPL localization to endosomes and later to lysosomes, leading to degradation of newly synthesized LPL. In terms of processing, tyrosine nitration after lipopolysaccharide (LPS) challenge down-regulates the lipase activity.

It localises to the cell membrane. Its subcellular location is the secreted. The protein localises to the extracellular space. It is found in the extracellular matrix. The enzyme catalyses a triacylglycerol + H2O = a diacylglycerol + a fatty acid + H(+). It catalyses the reaction a 1,2-diacyl-sn-glycero-3-phosphocholine + H2O = a 2-acyl-sn-glycero-3-phosphocholine + a fatty acid + H(+). The catalysed reaction is 1,2,3-tri-(9Z-octadecenoyl)-glycerol + H2O = di-(9Z)-octadecenoylglycerol + (9Z)-octadecenoate + H(+). It carries out the reaction 1,2-di-(9Z-octadecenoyl)-sn-glycero-3-phosphocholine + H2O = (9Z-octadecenoyl)-sn-glycero-3-phosphocholine + (9Z)-octadecenoate + H(+). The enzyme catalyses 1,2,3-tributanoylglycerol + H2O = dibutanoylglycerol + butanoate + H(+). It catalyses the reaction 1,2-dihexadecanoyl-sn-glycero-3-phosphocholine + H2O = hexadecanoyl-sn-glycero-3-phosphocholine + hexadecanoate + H(+). Its activity is regulated as follows. The apolipoprotein APOC2 acts as a coactivator of LPL activity. Ca(2+) binding promotes protein stability and formation of the active homodimer. Interaction with GPIHBP1 protects LPL against inactivation by ANGPTL4. Its function is as follows. Key enzyme in triglyceride metabolism. Catalyzes the hydrolysis of triglycerides from circulating chylomicrons and very low density lipoproteins (VLDL), and thereby plays an important role in lipid clearance from the blood stream, lipid utilization and storage. Although it has both phospholipase and triglyceride lipase activities it is primarily a triglyceride lipase with low but detectable phospholipase activity. Mediates margination of triglyceride-rich lipoprotein particles in capillaries. Recruited to its site of action on the luminal surface of vascular endothelium by binding to GPIHBP1 and cell surface heparan sulfate proteoglycans. This chain is Lipoprotein lipase (LPL), found in Ovis aries (Sheep).